Here is a 587-residue protein sequence, read N- to C-terminus: Probable terpene synthase 12 (587 aa).

Mg(2+) is bound by residues D338, D342, and E489. Positions 338–342 match the DDXXD motif motif; that stretch reads DDVYD.

Belongs to the terpene synthase family. Mg(2+) is required as a cofactor.

Probable sesquiterpene synthase. The sequence is that of Probable terpene synthase 12 (TPS12) from Ricinus communis (Castor bean).